Consider the following 1736-residue polypeptide: Hybrid signal transduction histidine kinase I (1736 aa).

Positions 143 to 161 (HNINNNQNNQNSVNINSSN) are enriched in low complexity. Residues 143–171 (HNINNNQNNQNSVNINSSNKGQYNRPEPS) are disordered. The 53-residue stretch at 234–286 (FEYPLRINRKNDNLVRYIQLKGEIIKKDDKVFKVLGVCHDFSEIQEAKDKLEE) folds into the PAC domain. Positions 287–358 (ESKFVEALIG…QINLEKSGTP (72 aa)) constitute a PAS domain. Residues 378-469 (TSNQQQSSLS…NTTNGIGGAT (92 aa)) form a disordered region. Residues 379–389 (SNQQQSSLSKS) show a composition bias toward low complexity. A compositionally biased stretch (polar residues) spans 392-412 (PRSQSNCSNGNKSQNRLSKNY). Over residues 413–469 (STTTTTTNNNNNNNNNNNNNNNNNNNNNSISQQQQTQVSTQQTQQQQNTTNGIGGAT) the composition is skewed to low complexity. Positions 556 to 908 (NISHELLSPM…TFHFILSIKS (353 aa)) constitute a Histidine kinase domain. Histidine 559 carries the phosphohistidine; by autocatalysis modification. Disordered regions lie at residues 711–821 (NSKT…KREK), 952–971 (TKKV…TNYG), 1080–1124 (NGNN…KQHS), 1157–1258 (PPKS…ILSP), 1277–1301 (SLTP…INNG), 1330–1393 (ASSP…NLSS), and 1419–1520 (SNNL…PPIL). Composition is skewed to acidic residues over residues 725–735 (SIDGDYDDQDN) and 758–789 (ELDE…DDDT). 3 stretches are compositionally biased toward low complexity: residues 790–807 (SSNT…FHNN), 961–971 (DNGNNDSTNYG), and 1080–1096 (NGNN…NNNI). Over residues 1097–1117 (QTPNGLNNSRGSSLISTPSTK) the composition is skewed to polar residues. Composition is skewed to low complexity over residues 1186 to 1195 (SSPPINSSSS) and 1202 to 1258 (TNGS…ILSP). Over residues 1330–1339 (ASSPKQSQRG) the composition is skewed to polar residues. 4 stretches are compositionally biased toward low complexity: residues 1340–1376 (YSPK…QQQQ), 1425–1475 (NNNN…STPE), 1482–1492 (SPRSNNNNNCS), and 1506–1520 (SSTI…PPIL). One can recognise a Response regulatory domain in the interval 1551–1674 (KVLVAEDNTM…LLYEVINTQI (124 aa)). Aspartate 1605 carries the post-translational modification 4-aspartylphosphate. The segment covering 1695 to 1722 (NNNNNNTNNNNNNNNSSNPVNNNNSNSI) has biased composition (low complexity). The segment at 1695–1736 (NNNNNNTNNNNNNNNSSNPVNNNNSNSIDATQQELNNEKIRI) is disordered.

Post-translationally, activation probably requires transfer of a phosphate group between a histidine in the kinase core (transmitter) domain and an aspartate of the receiver domain.

It catalyses the reaction ATP + protein L-histidine = ADP + protein N-phospho-L-histidine.. Its function is as follows. Acts as a receptor histidine kinase for a signal transduction pathway. This protein undergoes an ATP-dependent autophosphorylation at a conserved histidine residue in the kinase core, and a phosphoryl group is then transferred to a conserved aspartate residue in the receiver domain. The chain is Hybrid signal transduction histidine kinase I (dhkI-1) from Dictyostelium discoideum (Social amoeba).